A 309-amino-acid chain; its full sequence is Taste receptor type 2 member 8 (309 aa).

Residues 1 to 7 (MFSPADN) are Extracellular-facing. A helical transmembrane segment spans residues 8 to 28 (IFIILITGEFILGILGNGYIA). The Cytoplasmic segment spans residues 29 to 50 (LVNWIDWIKKKKISTIDYILTN). A helical membrane pass occupies residues 51–71 (LVISRICLISVMVVNGIVIAV). At 72-82 (YPDVYTKSKLQ) the chain is on the extracellular side. The helical transmembrane segment at 83–103 (IAICTFWTFANYLNMWITTCL) threads the bilayer. The Cytoplasmic segment spans residues 104-131 (NVFYFLKIANSSHPLFLWLKQKIDMVVR). A helical transmembrane segment spans residues 132–152 (WILLGCFAISLLVSLIAAIVL). Residues 153–184 (SYDYRFHAIAKHKRNITEMFHVSKRPYFEPLT) are Extracellular-facing. N-linked (GlcNAc...) asparagine glycosylation occurs at Asn167. A helical transmembrane segment spans residues 185 to 205 (LFNLFAIVPFIVSLISFFLLV). Over 206-239 (RSLWRHTKQIKLYATGGRDPSTEVHVRAIKTMTS) the chain is Cytoplasmic. The helical transmembrane segment at 240 to 260 (FIFLFFLYYISSILVTFSYLM) threads the bilayer. At 261–266 (TKYKLA) the chain is on the extracellular side. A helical membrane pass occupies residues 267–287 (VEFGEIVAILYPLGHSLILIV). Residues 288–309 (LNNKLRQTFVRMLTCRKIACVI) lie on the Cytoplasmic side of the membrane.

It belongs to the G-protein coupled receptor T2R family.

The protein resides in the membrane. Receptor that may play a role in the perception of bitterness and is gustducin-linked. May play a role in sensing the chemical composition of the gastrointestinal content. The activity of this receptor may stimulate alpha gustducin, mediate PLC-beta-2 activation and lead to the gating of TRPM5. The polypeptide is Taste receptor type 2 member 8 (TAS2R8) (Gorilla gorilla gorilla (Western lowland gorilla)).